The chain runs to 223 residues: Cutinase 4 (223 aa).

Residues 1–26 (MPLPLLPPLLLPLEALLDLALHLVDS) form the signal peptide. Cysteines 60 and 133 form a disulfide. The active-site Nucleophile is the S144. C187 and C194 are disulfide-bonded. D191 is a catalytic residue. Catalysis depends on H203, which acts as the Proton donor/acceptor.

This sequence belongs to the cutinase family. In terms of processing, the 2 disulfide bonds play a critical role in holding the catalytic residues in juxta-position; reduction of the disulfide bridges results in the complete inactivation of the enzyme.

Its subcellular location is the secreted. The catalysed reaction is cutin + H2O = cutin monomers.. Functionally, catalyzes the hydrolysis of complex carboxylic polyesters found in the cell wall of plants. Degrades cutin, a macromolecule that forms the structure of the plant cuticle. Also degrades suberin, a specialized macromolecule found in the cell wall of various plant tissues. The chain is Cutinase 4 from Emericella nidulans (strain FGSC A4 / ATCC 38163 / CBS 112.46 / NRRL 194 / M139) (Aspergillus nidulans).